The primary structure comprises 516 residues: Cysteine--tRNA ligase (516 aa).

Cys-34 is a Zn(2+) binding site. The 'HIGH' region motif lies at 36–46 (PTVYNFAHLGN). Cys-225, His-250, and Glu-254 together coordinate Zn(2+). Positions 285–289 (KMSKS) match the 'KMSKS' region motif. Lys-288 lines the ATP pocket.

This sequence belongs to the class-I aminoacyl-tRNA synthetase family. Monomer. The cofactor is Zn(2+).

The protein resides in the cytoplasm. The enzyme catalyses tRNA(Cys) + L-cysteine + ATP = L-cysteinyl-tRNA(Cys) + AMP + diphosphate. This Zymomonas mobilis subsp. mobilis (strain ATCC 31821 / ZM4 / CP4) protein is Cysteine--tRNA ligase.